Reading from the N-terminus, the 308-residue chain is Porphobilinogen deaminase (308 aa).

The residue at position 243 (C243) is an S-(dipyrrolylmethanemethyl)cysteine.

Belongs to the HMBS family. Monomer. Dipyrromethane serves as cofactor.

The catalysed reaction is 4 porphobilinogen + H2O = hydroxymethylbilane + 4 NH4(+). Its pathway is porphyrin-containing compound metabolism; protoporphyrin-IX biosynthesis; coproporphyrinogen-III from 5-aminolevulinate: step 2/4. Its function is as follows. Tetrapolymerization of the monopyrrole PBG into the hydroxymethylbilane pre-uroporphyrinogen in several discrete steps. The chain is Porphobilinogen deaminase from Mesorhizobium japonicum (strain LMG 29417 / CECT 9101 / MAFF 303099) (Mesorhizobium loti (strain MAFF 303099)).